A 79-amino-acid chain; its full sequence is Small ribosomal subunit protein uS17 (79 aa).

Belongs to the universal ribosomal protein uS17 family. Part of the 30S ribosomal subunit.

Functionally, one of the primary rRNA binding proteins, it binds specifically to the 5'-end of 16S ribosomal RNA. This Rhizobium johnstonii (strain DSM 114642 / LMG 32736 / 3841) (Rhizobium leguminosarum bv. viciae) protein is Small ribosomal subunit protein uS17.